The chain runs to 585 residues: uncharacterized protein (585 aa).

Polar residues predominate over residues 1–18 (MSALSTKLEPTNSYSESL). Positions 1 to 23 (MSALSTKLEPTNSYSESLPPQRR) are disordered.

This sequence belongs to the protein kinase superfamily. ADCK protein kinase family.

This is an uncharacterized protein from Synechocystis sp. (strain ATCC 27184 / PCC 6803 / Kazusa).